Reading from the N-terminus, the 78-residue chain is Large ribosomal subunit protein bL28 (78 aa).

The protein belongs to the bacterial ribosomal protein bL28 family.

The sequence is that of Large ribosomal subunit protein bL28 from Methylococcus capsulatus (strain ATCC 33009 / NCIMB 11132 / Bath).